The chain runs to 338 residues: MYG1 protein YER156C (338 aa).

This sequence belongs to the MYG1 family.

This Saccharomyces cerevisiae (strain ATCC 204508 / S288c) (Baker's yeast) protein is MYG1 protein YER156C.